The primary structure comprises 227 residues: ATP synthase subunit delta (227 aa).

This sequence belongs to the ATPase delta chain family. As to quaternary structure, F-type ATPases have 2 components, F(1) - the catalytic core - and F(0) - the membrane proton channel. F(1) has five subunits: alpha(3), beta(3), gamma(1), delta(1), epsilon(1). F(0) has three main subunits: a(1), b(2) and c(10-14). The alpha and beta chains form an alternating ring which encloses part of the gamma chain. F(1) is attached to F(0) by a central stalk formed by the gamma and epsilon chains, while a peripheral stalk is formed by the delta and b chains.

The protein localises to the cell inner membrane. Its function is as follows. F(1)F(0) ATP synthase produces ATP from ADP in the presence of a proton or sodium gradient. F-type ATPases consist of two structural domains, F(1) containing the extramembraneous catalytic core and F(0) containing the membrane proton channel, linked together by a central stalk and a peripheral stalk. During catalysis, ATP synthesis in the catalytic domain of F(1) is coupled via a rotary mechanism of the central stalk subunits to proton translocation. In terms of biological role, this protein is part of the stalk that links CF(0) to CF(1). It either transmits conformational changes from CF(0) to CF(1) or is implicated in proton conduction. This chain is ATP synthase subunit delta, found in Rhodopirellula baltica (strain DSM 10527 / NCIMB 13988 / SH1).